Here is a 179-residue protein sequence, read N- to C-terminus: Vi polysaccharide biosynthesis protein TviA (179 aa).

The protein operates within glycan metabolism; Vi-antigen biosynthesis. Its pathway is capsule biogenesis; capsule polysaccharide biosynthesis. The sequence is that of Vi polysaccharide biosynthesis protein TviA (tviA) from Salmonella typhi.